The primary structure comprises 209 residues: T-cell surface glycoprotein CD8 beta chain (209 aa).

The signal sequence occupies residues 1-21; the sequence is MRPRMWLLLSAQLAALHGNSV. Residues 22–131 form the Ig-like V-type domain; sequence LQQTPAYIMV…TLIFGTGTQL (110 aa). Over 22 to 169 the chain is Extracellular; sequence LQQTPAYIMV…ETRKGPLCSP (148 aa). C41 and C115 are oxidised to a cystine. An N-linked (GlcNAc...) asparagine glycan is attached at N101. Residues 170 to 190 traverse the membrane as a helical segment; that stretch reads ITLSLLVAGILVLLVSLGVAI. At 191–209 the chain is on the cytoplasmic side; that stretch reads HLYCRQRRARLRFMKQFYK.

In terms of assembly, forms disulfide-linked heterodimers with CD8A at the cell surface. Interacts with CD3D; this interaction couples TCR-CD3 with CD8. Interacts with LCK. In terms of processing, phosphorylated as a consequence of T-cell activation. Post-translationally, palmitoylated at the cytoplasmic tail and thereby targets the heterodimer CD8A/CD8B to lipid rafts unlike CD8A homodimers.

It localises to the cell membrane. In terms of biological role, integral membrane glycoprotein that plays an essential role in the immune response and serves multiple functions in responses against both external and internal offenses. In T-cells, functions primarily as a coreceptor for MHC class I molecule:peptide complex. The antigens presented by class I peptides are derived from cytosolic proteins while class II derived from extracellular proteins. Interacts simultaneously with the T-cell receptor (TCR) and the MHC class I proteins presented by antigen presenting cells (APCs). In turn, recruits the Src kinase LCK to the vicinity of the TCR-CD3 complex. A palmitoylation site in the cytoplasmic tail of CD8B chain contributes to partitioning of CD8 into the plasma membrane lipid rafts where signaling proteins are enriched. Once LCK recruited, it initiates different intracellular signaling pathways by phosphorylating various substrates ultimately leading to lymphokine production, motility, adhesion and activation of cytotoxic T-lymphocytes (CTLs). Additionally, plays a critical role in thymic selection of CD8+ T-cells. The sequence is that of T-cell surface glycoprotein CD8 beta chain (CD8B) from Saimiri sciureus (Common squirrel monkey).